A 240-amino-acid polypeptide reads, in one-letter code: uncharacterized protein (240 aa).

The C2H2-type zinc-finger motif lies at 3–27 (LKCLECDKLLSSIEMAEFHSTKTSH). 2 disordered regions span residues 21–43 (HSTK…RSPE) and 120–171 (AEIE…RFSI). The segment covering 120–136 (AEIERDKKRRAAERENK) has biased composition (basic and acidic residues). The span at 155–166 (SSSTCTRTPPTS) shows a compositional bias: low complexity.

This is an uncharacterized protein from Schizosaccharomyces pombe (strain 972 / ATCC 24843) (Fission yeast).